The sequence spans 211 residues: Interleukin-6 (211 aa).

A signal peptide spans 1–25 (MNSLSTSTFSPVAFSLGLLLVMATA). A disulfide bridge links Cys-71 with Cys-77. Ser-80 is subject to Phosphoserine. A disulfide bond links Cys-100 and Cys-110.

Belongs to the IL-6 superfamily. In terms of assembly, component of a hexamer of two molecules each of IL6, IL6R and IL6ST; first binds to IL6R to associate with the signaling subunit IL6ST. Interacts with IL6R (via the N-terminal ectodomain); this interaction may be affected by IL6R-binding with SORL1, hence decreasing IL6 cis signaling. Interacts with SORL1 (via the N-terminal ectodomain); this interaction leads to IL6 internalization and lysosomal degradation. May form a trimeric complex with the soluble SORL1 ectodomain and soluble IL6R receptor; this interaction might stabilize circulating IL6, hence promoting IL6 trans signaling.

The protein localises to the secreted. Cytokine with a wide variety of biological functions in immunity, tissue regeneration, and metabolism. Binds to IL6R, then the complex associates to the signaling subunit IL6ST/gp130 to trigger the intracellular IL6-signaling pathway. The interaction with the membrane-bound IL6R and IL6ST stimulates 'classic signaling', whereas the binding of IL6 and soluble IL6R to IL6ST stimulates 'trans-signaling'. Alternatively, 'cluster signaling' occurs when membrane-bound IL6:IL6R complexes on transmitter cells activate IL6ST receptors on neighboring receiver cells. Functionally, IL6 is a potent inducer of the acute phase response. Rapid production of IL6 contributes to host defense during infection and tissue injury, but excessive IL6 synthesis is involved in disease pathology. In the innate immune response, is synthesized by myeloid cells, such as macrophages and dendritic cells, upon recognition of pathogens through toll-like receptors (TLRs) at the site of infection or tissue injury. In the adaptive immune response, is required for the differentiation of B cells into immunoglobulin-secreting cells. Plays a major role in the differentiation of CD4(+) T cell subsets. Essential factor for the development of T follicular helper (Tfh) cells that are required for the induction of germinal-center formation. Required to drive naive CD4(+) T cells to the Th17 lineage. Also required for proliferation of myeloma cells and the survival of plasmablast cells. Its function is as follows. Acts as an essential factor in bone homeostasis and on vessels directly or indirectly by induction of VEGF, resulting in increased angiogenesis activity and vascular permeability. Induces, through 'trans-signaling' and synergistically with IL1B and TNF, the production of VEGF. Involved in metabolic controls, is discharged into the bloodstream after muscle contraction increasing lipolysis and improving insulin resistance. 'Trans-signaling' in central nervous system also regulates energy and glucose homeostasis. Mediates, through GLP-1, crosstalk between insulin-sensitive tissues, intestinal L cells and pancreatic islets to adapt to changes in insulin demand. Also acts as a myokine. Plays a protective role during liver injury, being required for maintenance of tissue regeneration. Also has a pivotal role in iron metabolism by regulating HAMP/hepcidin expression upon inflammation or bacterial infection. Through activation of IL6ST-YAP-NOTCH pathway, induces inflammation-induced epithelial regeneration. This is Interleukin-6 (IL6) from Lama glama (Llama).